The primary structure comprises 380 residues: O-antigen polymerase (380 aa).

The next 12 helical transmembrane spans lie at 1–21, 27–47, 55–75, 94–114, 132–152, 169–189, 201–221, 229–249, 282–302, 306–326, 332–352, and 353–373; these read MTYFTGFILILFAIIIKRLTP, NIVLIANAFWGILLVGYTFNE, ATTLFFILAFLFFFSMTYILI, YIYWFAGMINIISICFGIILL, SISGFGLGISLPLSFCCMYLA, FLLAVLSTSKIFLILFLVYIV, LIYGVFVFGLFALSSIILGKF, IISAIFDTLRVYLFSGLAAFN, ILPWINIGVWDTNVYTAFAPW, LGLYAAIIIGILLGFYYGIWF, LAVGFYQTFLCFPLLMLFFQE, and HYLLSWKMHFIYFLCAILLAM.

The protein resides in the cell inner membrane. It carries out the reaction n lipid-linked O-antigen repeat units = a lipid-linked O antigen + (n-1) polyisoprenyl diphosphate.. The protein operates within bacterial outer membrane biogenesis; LPS O-antigen biosynthesis. Its function is as follows. Polymerase involved in the biosynthesis of the lipopolysaccharide (LPS). Catalyzes the polymerization of the O-antigen repeat units on the periplasmic face of the inner membrane, leading to the formation of the lipid-linked O-antigen molecule. The polypeptide is O-antigen polymerase (Shigella dysenteriae).